The following is a 173-amino-acid chain: Mesogenin-1 (173 aa).

Residues 39–68 (ESYSLSQTPSPQSVSPAASYESTYSSSPHT) are compositionally biased toward polar residues. Disordered regions lie at residues 39-69 (ESYS…PHTG) and 96-117 (TKKD…ASER). Residues 99 to 114 (DHGHKTSMTTHRRRKA) show a composition bias toward basic residues. The bHLH domain maps to 109–163 (HRRRKASEREKLRMRAIAEALHTLRNNLPPMYSQGRQPLTKIQTLKCTINYISEL).

The protein resides in the nucleus. In terms of biological role, involved in specifying the paraxial, but not dorsal, mesoderm. May regulate the expression of T-box transcription factors required for mesoderm formation and differentiation, such as brachyury T, wnt8, vegt and eomes. This is Mesogenin-1 (msgn1) from Xenopus laevis (African clawed frog).